A 124-amino-acid polypeptide reads, in one-letter code: Ribonuclease pancreatic (124 aa).

Positions 7 and 10 each coordinate substrate. His12 (proton acceptor) is an active-site residue. 4 disulfide bridges follow: Cys26/Cys84, Cys40/Cys95, Cys58/Cys110, and Cys65/Cys72. Asn34 carries an N-linked (GlcNAc...) asparagine glycan. Substrate contacts are provided by residues 41 to 45 (KPVNT), Lys66, and Arg85. The Proton donor role is filled by His119.

This sequence belongs to the pancreatic ribonuclease family. In terms of assembly, monomer. Interacts with and forms tight 1:1 complexes with RNH1. Dimerization of two such complexes may occur. Interaction with RNH1 inhibits this protein. As to expression, pancreas.

The protein resides in the secreted. It carries out the reaction an [RNA] containing cytidine + H2O = an [RNA]-3'-cytidine-3'-phosphate + a 5'-hydroxy-ribonucleotide-3'-[RNA].. It catalyses the reaction an [RNA] containing uridine + H2O = an [RNA]-3'-uridine-3'-phosphate + a 5'-hydroxy-ribonucleotide-3'-[RNA].. Its function is as follows. Endonuclease that catalyzes the cleavage of RNA on the 3' side of pyrimidine nucleotides. Acts on single-stranded and double-stranded RNA. This is Ribonuclease pancreatic (RNASE1) from Mesocricetus auratus (Golden hamster).